The sequence spans 88 residues: Sec-independent protein translocase protein TatA (88 aa).

The chain crosses the membrane as a helical span at residues 1–21 (MNLGPTEILLILVIVVLLFGA). Residues 46–56 (SNDDQRYEEQQ) show a composition bias toward basic and acidic residues. The segment at 46–88 (SNDDQRYEEQQQQRQIAAQAQQQVVNPVEIPQPQPTDIQRPQQ) is disordered. Low complexity predominate over residues 57 to 68 (QQRQIAAQAQQQ).

The protein belongs to the TatA/E family. The Tat system comprises two distinct complexes: a TatABC complex, containing multiple copies of TatA, TatB and TatC subunits, and a separate TatA complex, containing only TatA subunits. Substrates initially bind to the TatABC complex, which probably triggers association of the separate TatA complex to form the active translocon.

The protein localises to the cell membrane. Its function is as follows. Part of the twin-arginine translocation (Tat) system that transports large folded proteins containing a characteristic twin-arginine motif in their signal peptide across membranes. TatA could form the protein-conducting channel of the Tat system. This chain is Sec-independent protein translocase protein TatA, found in Corynebacterium diphtheriae (strain ATCC 700971 / NCTC 13129 / Biotype gravis).